A 117-amino-acid polypeptide reads, in one-letter code: DNA-directed RNA polymerase subunit omega (117 aa).

Over residues 96-105 the composition is skewed to basic and acidic residues; it reads KEEAEEEAKQ. The disordered stretch occupies residues 96-117; that stretch reads KEEAEEEAKQKNSRAAKAAAAE. Positions 108-117 are enriched in low complexity; the sequence is SRAAKAAAAE.

The protein belongs to the RNA polymerase subunit omega family. As to quaternary structure, the RNAP catalytic core consists of 2 alpha, 1 beta, 1 beta' and 1 omega subunit. When a sigma factor is associated with the core the holoenzyme is formed, which can initiate transcription.

It catalyses the reaction RNA(n) + a ribonucleoside 5'-triphosphate = RNA(n+1) + diphosphate. Its function is as follows. Promotes RNA polymerase assembly. Latches the N- and C-terminal regions of the beta' subunit thereby facilitating its interaction with the beta and alpha subunits. In Lactococcus lactis subsp. cremoris (strain MG1363), this protein is DNA-directed RNA polymerase subunit omega.